Consider the following 473-residue polypeptide: Hyaluronidase-2 (473 aa).

Residues 1-20 (MRAGLGPIITLALVLEVAWA) form the signal peptide. 2 disulfides stabilise this stretch: C47-C340 and C211-C227. Residues N74 and N103 are each glycosylated (N-linked (GlcNAc...) asparagine). Catalysis depends on E135, which acts as the Proton donor. N-linked (GlcNAc...) asparagine glycosylation occurs at N357. An EGF-like domain is found at 361–439 (ATQYCSWTQC…YLGWGGEQCQ (79 aa)). Cystine bridges form between C365-C376, C370-C427, and C429-C438. The GPI-anchor amidated aspartate moiety is linked to residue D448. Residues 449 to 473 (ASRAWAGAHLASLLGLVAMTLTWTL) constitute a propeptide, removed in mature form.

It belongs to the glycosyl hydrolase 56 family. In terms of assembly, interacts with MST1R.

The protein resides in the cell membrane. The catalysed reaction is Random hydrolysis of (1-&gt;4)-linkages between N-acetyl-beta-D-glucosamine and D-glucuronate residues in hyaluronate.. In terms of biological role, catalyzes hyaluronan degradation into small fragments that are endocytosed and degraded in lysosomes by HYAL1 and exoglycosidases. Essential for the breakdown of extracellular matrix hyaluronan. The chain is Hyaluronidase-2 (Hyal2) from Rattus norvegicus (Rat).